We begin with the raw amino-acid sequence, 192 residues long: Peptidyl-tRNA hydrolase (192 aa).

Tyr16 provides a ligand contact to tRNA. His21 serves as the catalytic Proton acceptor. Residues Tyr66 and Asn68 each contribute to the tRNA site.

It belongs to the PTH family. As to quaternary structure, monomer.

It localises to the cytoplasm. It carries out the reaction an N-acyl-L-alpha-aminoacyl-tRNA + H2O = an N-acyl-L-amino acid + a tRNA + H(+). In terms of biological role, hydrolyzes ribosome-free peptidyl-tRNAs (with 1 or more amino acids incorporated), which drop off the ribosome during protein synthesis, or as a result of ribosome stalling. Functionally, catalyzes the release of premature peptidyl moieties from peptidyl-tRNA molecules trapped in stalled 50S ribosomal subunits, and thus maintains levels of free tRNAs and 50S ribosomes. The chain is Peptidyl-tRNA hydrolase from Aquifex aeolicus (strain VF5).